Consider the following 77-residue polypeptide: Protein OPG146 (77 aa).

It belongs to the orthopoxvirus OPG146 family. In terms of assembly, interacts with capping enzyme RAP94/OPG109, the two large RNA polymerase subunits RPO147/OPG105 and RPO132/OPG151, the two early transcription factor subunits OPG185 and OPG133, one of the capping enzyme subunits OPG113, the nucleoside triphosphate phosphohydrolase OPG123, two core proteins OPG129 and OPG138, and a virion protein OPG064.

The protein resides in the virion. The protein localises to the host cytoplasm. It localises to the host nucleus. Plays a role in the maturation of immature virions to infectious particles. May also participate in viral transcription. The sequence is that of Protein OPG146 (OPG146) from Homo sapiens (Human).